The primary structure comprises 151 residues: UPF0735 ACT domain-containing protein SERP1207 (151 aa).

Residues 74-149 enclose the ACT domain; that stretch reads TLILYVNDIV…HVTKVDLISM (76 aa).

The protein belongs to the UPF0735 family.

The chain is UPF0735 ACT domain-containing protein SERP1207 from Staphylococcus epidermidis (strain ATCC 35984 / DSM 28319 / BCRC 17069 / CCUG 31568 / BM 3577 / RP62A).